A 283-amino-acid polypeptide reads, in one-letter code: Putative ABC transporter ATP-binding protein MA_4342 (283 aa).

In terms of domain architecture, ABC transporter spans 3-238 (IILENVSFFY…KNVPLPPVTS (236 aa)). ATP is bound at residue 40–47 (GEKGAGKS).

This sequence belongs to the ABC transporter superfamily.

The protein localises to the cell membrane. Probably part of an ABC transporter complex. Responsible for energy coupling to the transport system. The polypeptide is Putative ABC transporter ATP-binding protein MA_4342 (Methanosarcina acetivorans (strain ATCC 35395 / DSM 2834 / JCM 12185 / C2A)).